A 962-amino-acid polypeptide reads, in one-letter code: Protease 3 (962 aa).

A signal peptide spans 1 to 23; it reads MPRSTWFKALLLLVALWAPLSQA. Residue histidine 88 participates in Zn(2+) binding. Glutamate 91 acts as the Proton acceptor in catalysis. Residues histidine 92 and glutamate 169 each contribute to the Zn(2+) site.

This sequence belongs to the peptidase M16 family. As to quaternary structure, monomer. The cofactor is Zn(2+).

The protein resides in the periplasm. It catalyses the reaction Preferential cleavage of 16-Tyr-|-Leu-17 and 25-Phe-|-Tyr-26 bonds of oxidized insulin B chain. Also acts on other substrates of Mw less than 7 kDa such as insulin and glucagon.. Functionally, endopeptidase that degrades small peptides of less than 7 kDa, such as glucagon and insulin. This Escherichia coli O157:H7 protein is Protease 3 (ptrA).